A 212-amino-acid chain; its full sequence is Uridine kinase (212 aa).

Residue 13 to 20 coordinates ATP; the sequence is GASASGKS.

Belongs to the uridine kinase family.

The protein resides in the cytoplasm. The catalysed reaction is uridine + ATP = UMP + ADP + H(+). The enzyme catalyses cytidine + ATP = CMP + ADP + H(+). It functions in the pathway pyrimidine metabolism; CTP biosynthesis via salvage pathway; CTP from cytidine: step 1/3. It participates in pyrimidine metabolism; UMP biosynthesis via salvage pathway; UMP from uridine: step 1/1. This chain is Uridine kinase, found in Shewanella denitrificans (strain OS217 / ATCC BAA-1090 / DSM 15013).